The primary structure comprises 141 residues: Large ribosomal subunit protein uL11 (141 aa).

Belongs to the universal ribosomal protein uL11 family. As to quaternary structure, part of the ribosomal stalk of the 50S ribosomal subunit. Interacts with L10 and the large rRNA to form the base of the stalk. L10 forms an elongated spine to which L12 dimers bind in a sequential fashion forming a multimeric L10(L12)X complex. One or more lysine residues are methylated.

Its function is as follows. Forms part of the ribosomal stalk which helps the ribosome interact with GTP-bound translation factors. This Lactococcus lactis subsp. lactis (strain IL1403) (Streptococcus lactis) protein is Large ribosomal subunit protein uL11.